A 109-amino-acid chain; its full sequence is Ig kappa chain V region K16-167 (109 aa).

A framework-1 region spans residues 1-23 (ALVMTQTPSPVSAAVGGTVTISC). The tract at residues 24 to 35 (QASQSVYSNNLS) is complementarity-determining-1. The interval 36–50 (WFQQKPGQPPKLLIY) is framework-2. Positions 51-57 (KASTLAS) are complementarity-determining-2. Residues 58 to 89 (GVPSRFKGSGSGTQFTLPISGVECDDAATYYC) are framework-3. The complementarity-determining-3 stretch occupies residues 90–99 (QGTNTGNNIV). The segment at 100–109 (FGTGTEVVVK) is framework-4.

The protein is Ig kappa chain V region K16-167 of Oryctolagus cuniculus (Rabbit).